The primary structure comprises 224 residues: 2,5-diamino-6-ribosylamino-4(3H)-pyrimidinone 5'-phosphate reductase (224 aa).

NADP(+) is bound by residues glycine 16, threonine 57, aspartate 61, serine 83–arginine 86, valine 134, and glycine 156–leucine 159.

It belongs to the HTP reductase family. In terms of assembly, homodimer.

The catalysed reaction is 2,5-diamino-6-(1-D-ribitylamino)pyrimidin-4(3H)-one 5'-phosphate + NADP(+) = 2,5-diamino-6-(1-D-ribosylamino)pyrimidin-4(3H)-one 5'-phosphate + NADPH + H(+). It catalyses the reaction 2,5-diamino-6-(1-D-ribitylamino)pyrimidin-4(3H)-one 5'-phosphate + NAD(+) = 2,5-diamino-6-(1-D-ribosylamino)pyrimidin-4(3H)-one 5'-phosphate + NADH + H(+). Its pathway is cofactor biosynthesis; riboflavin biosynthesis. Its function is as follows. Catalyzes an early step in riboflavin biosynthesis, the NAD(P)H-dependent reduction of the ribose side chain of 2,5-diamino-6-ribosylamino-4(3H)-pyrimidinone 5'-phosphate, yielding 2,5-diamino-6-ribitylamino-4(3H)-pyrimidinone 5'-phosphate. The beta anomer is the authentic substrate, and the alpha anomer can serve as substrate subsequent to spontaneous anomerization. NADPH and NADH function equally well as the reductants. Does not catalyze the reduction of 5-amino-6-(5-phospho-D-ribosylamino)uracil to 5-amino-6-(5-phospho-D-ribitylamino)uracil. This chain is 2,5-diamino-6-ribosylamino-4(3H)-pyrimidinone 5'-phosphate reductase (arfC), found in Methanocaldococcus jannaschii (strain ATCC 43067 / DSM 2661 / JAL-1 / JCM 10045 / NBRC 100440) (Methanococcus jannaschii).